Reading from the N-terminus, the 272-residue chain is Phosphate import ATP-binding protein PstB (272 aa).

In terms of domain architecture, ABC transporter spans 18–257; that stretch reads VSMQNVTISY…FNDTQSIFNS (240 aa). Position 50-57 (50-57) interacts with ATP; that stretch reads GPSGCGKS.

The protein belongs to the ABC transporter superfamily. Phosphate importer (TC 3.A.1.7) family. The complex is composed of two ATP-binding proteins (PstB), two transmembrane proteins (PstC and PstA) and a solute-binding protein (PstS).

Its subcellular location is the cell inner membrane. The catalysed reaction is phosphate(out) + ATP + H2O = ADP + 2 phosphate(in) + H(+). In terms of biological role, part of the ABC transporter complex PstSACB involved in phosphate import. Responsible for energy coupling to the transport system. This Synechococcus sp. (strain CC9902) protein is Phosphate import ATP-binding protein PstB.